A 518-amino-acid chain; its full sequence is Major facilitator superfamily domain-containing protein 8 (518 aa).

Positions 1 to 20 are disordered; the sequence is MAGLRNESEQEPLLGDTPGS. Residues 1–40 are Cytoplasmic-facing; sequence MAGLRNESEQEPLLGDTPGSREWDILETEEHYKSRWRSIR. Residues 13-14 carry the Dileucine internalization motif motif; sequence LL. The helical transmembrane segment at 41–61 threads the bilayer; the sequence is ILYLTMFLSSVGFSVVMMSIW. Residues 62–74 lie on the Extracellular side of the membrane; the sequence is PYLQKIDPTADTS. Residues 75–95 form a helical membrane-spanning segment; that stretch reads FLGWVIASYSLGQMVASPIFG. Topologically, residues 96–105 are cytoplasmic; it reads LWSNYRPRKE. Residues 106 to 126 form a helical membrane-spanning segment; that stretch reads PLIVSILISVAANCLYAYLHI. The Extracellular segment spans residues 127–131; sequence PASHN. A helical membrane pass occupies residues 132–152; that stretch reads KYYMLVARGLLGIGAGNVAVV. Topologically, residues 153 to 173 are cytoplasmic; sequence RSYTAGATSLQERTSSMANIS. Residues 174–194 traverse the membrane as a helical segment; sequence MCQALGFILGPVFQTCFTFLG. The Extracellular portion of the chain corresponds to 195–211; that stretch reads EKGVTWDVIKLQINMYT. The chain crosses the membrane as a helical span at residues 212–232; sequence TPVLLSAFLGILNIILILAIL. Over 233 to 266 the chain is Cytoplasmic; sequence REHRVDDSGRQCKSINFEEASTDEAQVPQGNIDQ. A helical membrane pass occupies residues 267 to 287; that stretch reads VAVVAINVLFFVTLFIFALFE. Residues 288 to 304 are Extracellular-facing; that stretch reads TIITPLTMDMYAWTQEQ. A helical transmembrane segment spans residues 305–325; the sequence is AVLYNGIILAALGVEAVVIFL. The Cytoplasmic segment spans residues 326-337; it reads GVKLLSKKIGER. A helical membrane pass occupies residues 338-358; the sequence is AILLGGLIVVWVGFFILLPWG. Residues 359–412 lie on the Extracellular side of the membrane; sequence NQFPKIQWEDLHNNSIPNTTFGEIIIGLWKSPMEDDNERPTGCSIEQAWCLYTP. N-linked (GlcNAc...) asparagine glycosylation is found at Asn-371 and Asn-376. A helical membrane pass occupies residues 413–433; that stretch reads VIHLAQFLTSAVLIGLGYPVC. Residues 434–451 lie on the Cytoplasmic side of the membrane; that stretch reads NLMSYTLYSKILGPKPQG. Residues 452–472 form a helical membrane-spanning segment; it reads VYMGWLTASGSGARILGPMFI. The Extracellular portion of the chain corresponds to 473-482; it reads SQVYAHWGPR. A helical transmembrane segment spans residues 483-503; sequence WAFSLVCGIIVLTITLLGVVY. The Cytoplasmic portion of the chain corresponds to 504-518; the sequence is KRLIALSVRYGRIQE.

The protein belongs to the major facilitator superfamily. In terms of tissue distribution, expressed at very low levels in all tissues tested.

It is found in the endosome membrane. The protein resides in the lysosome membrane. The catalysed reaction is chloride(in) = chloride(out). It catalyses the reaction iodide(out) = iodide(in). It carries out the reaction fluoride(in) = fluoride(out). Its activity is regulated as follows. Inhibited by chloride channel blockers 4,4'-diisothiocyano-2,2'-stilbenedisulfonate (DIDS), niflumic acid (NFA), and 5-Nitro-2-(3-phenylpropylamino) benzoic acid (NPPB). Its function is as follows. Outward-rectifying chloride channel involved in endolysosomal chloride homeostasis, membrane fusion and function. Conducts chloride currents up to hundreds of picoamperes. Regulates lysosomal calcium content by reducing the lysosomal membrane potential, thereby activating TRPML1 channel and further release of lysosomal calcium ions. Regulates the pH in endolysosomal compartments and may contribute to progressive acidification from endosome to lysosome. Permeable to other halides such as iodide and fluoride ions. The chain is Major facilitator superfamily domain-containing protein 8 from Homo sapiens (Human).